The primary structure comprises 61 residues: Photosystem II reaction center protein K (61 aa).

A propeptide spanning residues 1–24 (MLNTFSLIGICLNSTLFSSSFFFG) is cleaved from the precursor. A helical transmembrane segment spans residues 36–56 (IVDIMPVIPLFFFLLAFVWQA).

It belongs to the PsbK family. As to quaternary structure, PSII is composed of 1 copy each of membrane proteins PsbA, PsbB, PsbC, PsbD, PsbE, PsbF, PsbH, PsbI, PsbJ, PsbK, PsbL, PsbM, PsbT, PsbX, PsbY, PsbZ, Psb30/Ycf12, at least 3 peripheral proteins of the oxygen-evolving complex and a large number of cofactors. It forms dimeric complexes.

Its subcellular location is the plastid. It localises to the chloroplast thylakoid membrane. Functionally, one of the components of the core complex of photosystem II (PSII). PSII is a light-driven water:plastoquinone oxidoreductase that uses light energy to abstract electrons from H(2)O, generating O(2) and a proton gradient subsequently used for ATP formation. It consists of a core antenna complex that captures photons, and an electron transfer chain that converts photonic excitation into a charge separation. The protein is Photosystem II reaction center protein K of Nicotiana tomentosiformis (Tobacco).